Here is a 183-residue protein sequence, read N- to C-terminus: Negative modulator of initiation of replication (183 aa).

An interaction with DNA region spans residues 90 to 91 (AV).

Belongs to the SeqA family. As to quaternary structure, homodimer. Polymerizes to form helical filaments.

It is found in the cytoplasm. Its function is as follows. Negative regulator of replication initiation, which contributes to regulation of DNA replication and ensures that replication initiation occurs exactly once per chromosome per cell cycle. Binds to pairs of hemimethylated GATC sequences in the oriC region, thus preventing assembly of replication proteins and re-initiation at newly replicated origins. Repression is relieved when the region becomes fully methylated. This is Negative modulator of initiation of replication from Shewanella oneidensis (strain ATCC 700550 / JCM 31522 / CIP 106686 / LMG 19005 / NCIMB 14063 / MR-1).